The chain runs to 216 residues: V-type ATP synthase subunit D (216 aa).

It belongs to the V-ATPase D subunit family.

Functionally, produces ATP from ADP in the presence of a proton gradient across the membrane. This is V-type ATP synthase subunit D from Clostridium botulinum (strain ATCC 19397 / Type A).